We begin with the raw amino-acid sequence, 946 residues long: Ent-kaur-16-ene synthase (946 aa).

Mg(2+)-binding residues include aspartate 656, glutamate 660, asparagine 839, aspartate 840, serine 843, and aspartate 847. Residues 656–660 (DEFFE) carry the DEXXE motif motif.

Belongs to the terpene synthase family. Mg(2+) serves as cofactor.

The enzyme catalyses ent-copalyl diphosphate = ent-kaur-16-ene + diphosphate. It carries out the reaction (2E,6E,10E)-geranylgeranyl diphosphate = ent-copalyl diphosphate. It participates in plant hormone biosynthesis; gibberellin biosynthesis. In terms of biological role, catalyzes the conversion of geranylgeranyl diphosphate to the gibberellin precursor ent-kaurene diphosphate in a two step process. The polypeptide is Ent-kaur-16-ene synthase (Phaeosphaeria sp. (strain L487)).